Reading from the N-terminus, the 337-residue chain is MPVKAGINGFGRIGRIVLRNALLHGDIDVVAVNDPFIDLEYMVYMFKYDSVHGRFKGSVEAKDGKLYVEGKPIHVFAEKDPANIPWGSVGAEYIVESTGVFTTTEKASAHLKGVCKKVIISAPSADAPMFVCGVNLDAYDSKYKVISNASCTTNCLAPLAKVIHDKFGIVQGLMTSVHATTATQKTVDGPSNKDWLGGRSVGNNIIPSSTGAAKAVGKVIPSLNGKLNGLAFRVPTVDVSVVDLVVRLEKPASYDEIKQAIKEASETTHKGILGYTEEKVVSTDFTGNDNSSIFDRDAGIALNKTFVKLISWYDNEWGYSRRCCDLLGYAAKVDGAL.

NAD(+) contacts are provided by residues 12–13, D34, and K79; that span reads RI. D-glyceraldehyde 3-phosphate is bound by residues 150–152, T181, 210–211, and R233; these read SCT and TG. The active-site Nucleophile is the C151. N315 contacts NAD(+).

It belongs to the glyceraldehyde-3-phosphate dehydrogenase family. In terms of assembly, homotetramer.

It localises to the cytoplasm. The catalysed reaction is D-glyceraldehyde 3-phosphate + phosphate + NAD(+) = (2R)-3-phospho-glyceroyl phosphate + NADH + H(+). It participates in carbohydrate degradation; glycolysis; pyruvate from D-glyceraldehyde 3-phosphate: step 1/5. The sequence is that of Glyceraldehyde-3-phosphate dehydrogenase (GPD) from Phanerodontia chrysosporium (White-rot fungus).